The chain runs to 318 residues: ATP-dependent (S)-NAD(P)H-hydrate dehydratase (318 aa).

The YjeF C-terminal domain maps to 3-313; sequence AREVFKRVIP…KEIGPAFDSL (311 aa). Residues G119 and 172–178 each bind (6S)-NADPHX; that span reads NTNEFKR. ATP is bound by residues 210-214 and 229-238; these read KGSKD and TSLRRCGGQG. D239 serves as a coordination point for (6S)-NADPHX.

It belongs to the NnrD/CARKD family. Requires Mg(2+) as cofactor.

The protein resides in the cytoplasm. The catalysed reaction is (6S)-NADHX + ATP = ADP + phosphate + NADH + H(+). The enzyme catalyses (6S)-NADPHX + ATP = ADP + phosphate + NADPH + H(+). Catalyzes the dehydration of the S-form of NAD(P)HX at the expense of ATP, which is converted to ADP. Together with NAD(P)HX epimerase, which catalyzes the epimerization of the S- and R-forms, the enzyme allows the repair of both epimers of NAD(P)HX, a damaged form of NAD(P)H that is a result of enzymatic or heat-dependent hydration. This Batrachochytrium dendrobatidis (strain JAM81 / FGSC 10211) (Frog chytrid fungus) protein is ATP-dependent (S)-NAD(P)H-hydrate dehydratase.